A 1216-amino-acid chain; its full sequence is 1-phosphatidylinositol 4,5-bisphosphate phosphodiesterase beta-1 (1216 aa).

C17 carries S-palmitoyl cysteine lipidation. S236 is subject to Phosphoserine. Positions 316–467 (EDMSQPLSHY…LMYKILVKNK (152 aa)) constitute a PI-PLC X-box domain. Residues H331 and H378 contribute to the active site. S417 carries the post-translational modification Phosphoserine. Positions 469 to 534 (KSHKSSEGSG…MDEGTAGSEA (66 aa)) are disordered. Residues 472-483 (KSSEGSGKKKLS) are compositionally biased toward basic and acidic residues. Positions 491-501 (SDSSSVFEPSS) are enriched in low complexity. A compositionally biased stretch (acidic residues) spans 507–518 (ADTESDDDDDDD). Position 509 is a phosphothreonine (T509). Phosphoserine is present on residues S511 and S582. A PI-PLC Y-box domain is found at 540-656 (MSNLVNYIQP…GYRLKPEFMR (117 aa)). The region spanning 656-786 (RRPDKHFDPF…RNERNQPLTL (131 aa)) is the C2 domain. Disordered regions lie at residues 834–891 (DEEE…VKAP), 967–989 (EKSA…GSSA), 1072–1095 (MDKK…EEEK), and 1173–1216 (ISED…DTPL). Residues 846–868 (ETSSEAPSETRTTPAENGVNHTA) show a composition bias toward polar residues. Residue S887 is modified to Phosphoserine; by PKC. Positions 967-979 (EKSAKKDSKKKSE) are enriched in basic and acidic residues. S978 and S987 each carry phosphoserine. The segment covering 1075 to 1095 (KRQEKITEAKSKDKSQMEEEK) has biased composition (basic and acidic residues). Phosphoserine occurs at positions 1197, 1199, and 1200. Positions 1205 to 1216 (RENPGREFDTPL) are enriched in basic and acidic residues.

As to quaternary structure, interacts with DGKQ. It depends on Ca(2+) as a cofactor. In terms of processing, palmitoylated. Palmitoylation at Cys-17 by ZDHHC21 regulates the signaling activity of PLCB1 and the function of the endothelial barrier. Palmitoylation by ZDHHC21 is stimulated by inflammation.

It is found in the nucleus membrane. Its subcellular location is the cytoplasm. It catalyses the reaction a 1,2-diacyl-sn-glycero-3-phospho-(1D-myo-inositol-4,5-bisphosphate) + H2O = 1D-myo-inositol 1,4,5-trisphosphate + a 1,2-diacyl-sn-glycerol + H(+). The catalysed reaction is a 1,2-diacyl-sn-glycero-3-phospho-(1D-myo-inositol) + H2O = 1D-myo-inositol 1-phosphate + a 1,2-diacyl-sn-glycerol + H(+). Catalyzes the hydrolysis of 1-phosphatidylinositol 4,5-bisphosphate into diacylglycerol (DAG) and inositol 1,4,5-trisphosphate (IP3) and mediates intracellular signaling downstream of G protein-coupled receptors. Regulates the function of the endothelial barrier. The protein is 1-phosphatidylinositol 4,5-bisphosphate phosphodiesterase beta-1 of Mus musculus (Mouse).